We begin with the raw amino-acid sequence, 927 residues long: Isoleucine--tRNA ligase (927 aa).

The 'HIGH' region signature appears at 57–67 (PFANGNIHMGH). Position 553 (Glu553) interacts with L-isoleucyl-5'-AMP. Positions 594–598 (KMSKS) match the 'KMSKS' region motif. Lys597 provides a ligand contact to ATP. Cys886, Cys889, Cys906, and Cys909 together coordinate Zn(2+).

The protein belongs to the class-I aminoacyl-tRNA synthetase family. IleS type 1 subfamily. In terms of assembly, monomer. Zn(2+) serves as cofactor.

The protein localises to the cytoplasm. The enzyme catalyses tRNA(Ile) + L-isoleucine + ATP = L-isoleucyl-tRNA(Ile) + AMP + diphosphate. Functionally, catalyzes the attachment of isoleucine to tRNA(Ile). As IleRS can inadvertently accommodate and process structurally similar amino acids such as valine, to avoid such errors it has two additional distinct tRNA(Ile)-dependent editing activities. One activity is designated as 'pretransfer' editing and involves the hydrolysis of activated Val-AMP. The other activity is designated 'posttransfer' editing and involves deacylation of mischarged Val-tRNA(Ile). In Lactobacillus helveticus (strain DPC 4571), this protein is Isoleucine--tRNA ligase.